Here is a 485-residue protein sequence, read N- to C-terminus: Zinc finger protein 639 (485 aa).

A compositionally biased stretch (basic residues) spans 1–14; it reads MSEYPKKRKRKTLH. Disordered regions lie at residues 1–23 and 54–82; these read MSEY…DSSG and DNKD…SRSQ. S60 is modified (phosphoserine). Residue K76 forms a Glycyl lysine isopeptide (Lys-Gly) (interchain with G-Cter in SUMO2) linkage. A Phosphoserine modification is found at S88. Glycyl lysine isopeptide (Lys-Gly) (interchain with G-Cter in SUMO2) cross-links involve residues K177, K181, and K226. C2H2-type zinc fingers lie at residues 204–227, 233–255, 260–283, 289–311, 374–397, 403–425, 431–454, and 460–482; these read YKCE…ILKH, NVCR…AKLH, YICK…ADTH, YWCE…FQEH, FVCQ…AIEH, HVCD…LNSH, YLCQ…DFKH, and HKCS…LPVH. Positions 371–455 are interaction with CTNNA2; the sequence is KNFFVCQVCG…LKIHLDFKHS (85 aa).

This sequence belongs to the krueppel C2H2-type zinc-finger protein family. As to quaternary structure, interacts with CTNNA2.

The protein localises to the nucleus. Its function is as follows. Binds DNA and may function as a transcriptional repressor. In Rattus norvegicus (Rat), this protein is Zinc finger protein 639 (Znf639).